A 185-amino-acid polypeptide reads, in one-letter code: Ribosome-recycling factor (185 aa).

The tract at residues 136–155 (NDDLKKLEKNGDITEDELRA) is disordered.

This sequence belongs to the RRF family.

Its subcellular location is the cytoplasm. Its function is as follows. Responsible for the release of ribosomes from messenger RNA at the termination of protein biosynthesis. May increase the efficiency of translation by recycling ribosomes from one round of translation to another. This is Ribosome-recycling factor from Bacillus velezensis (strain DSM 23117 / BGSC 10A6 / LMG 26770 / FZB42) (Bacillus amyloliquefaciens subsp. plantarum).